We begin with the raw amino-acid sequence, 295 residues long: UDP-N-acetylenolpyruvoylglucosamine reductase (295 aa).

Residues 23 to 188 enclose the FAD-binding PCMH-type domain; it reads KVGGPADFLA…ISAKFALKPG (166 aa). Arginine 167 is an active-site residue. The active-site Proton donor is the serine 217. The active site involves glutamate 287.

The protein belongs to the MurB family. FAD serves as cofactor.

The protein resides in the cytoplasm. The catalysed reaction is UDP-N-acetyl-alpha-D-muramate + NADP(+) = UDP-N-acetyl-3-O-(1-carboxyvinyl)-alpha-D-glucosamine + NADPH + H(+). The protein operates within cell wall biogenesis; peptidoglycan biosynthesis. Cell wall formation. In Streptococcus pyogenes serotype M12 (strain MGAS9429), this protein is UDP-N-acetylenolpyruvoylglucosamine reductase.